Here is a 200-residue protein sequence, read N- to C-terminus: Probable GTP-binding protein EngB (200 aa).

The EngB-type G domain occupies 22–199 (NVAEVAFLGR…QDKITGYLFG (178 aa)). Residues 30–37 (GRSNVGKS), 57–61 (GKTQL), 85–88 (DLPG), 155–158 (TKID), and 177–180 (FLSN) each bind GTP. Mg(2+)-binding residues include Ser-37 and Thr-59.

Belongs to the TRAFAC class TrmE-Era-EngA-EngB-Septin-like GTPase superfamily. EngB GTPase family. The cofactor is Mg(2+).

Functionally, necessary for normal cell division and for the maintenance of normal septation. This is Probable GTP-binding protein EngB from Aliarcobacter butzleri (strain RM4018) (Arcobacter butzleri).